The following is a 364-amino-acid chain: Aminomethyltransferase (364 aa).

Belongs to the GcvT family. The glycine cleavage system is composed of four proteins: P, T, L and H.

It carries out the reaction N(6)-[(R)-S(8)-aminomethyldihydrolipoyl]-L-lysyl-[protein] + (6S)-5,6,7,8-tetrahydrofolate = N(6)-[(R)-dihydrolipoyl]-L-lysyl-[protein] + (6R)-5,10-methylene-5,6,7,8-tetrahydrofolate + NH4(+). In terms of biological role, the glycine cleavage system catalyzes the degradation of glycine. The chain is Aminomethyltransferase from Shewanella baltica (strain OS195).